The sequence spans 184 residues: Peptidyl-tRNA hydrolase (184 aa).

Tyr14 contacts tRNA. His19 serves as the catalytic Proton acceptor. Positions 60 and 62 each coordinate tRNA.

This sequence belongs to the PTH family. In terms of assembly, monomer.

It localises to the cytoplasm. The catalysed reaction is an N-acyl-L-alpha-aminoacyl-tRNA + H2O = an N-acyl-L-amino acid + a tRNA + H(+). Its function is as follows. Hydrolyzes ribosome-free peptidyl-tRNAs (with 1 or more amino acids incorporated), which drop off the ribosome during protein synthesis, or as a result of ribosome stalling. Functionally, catalyzes the release of premature peptidyl moieties from peptidyl-tRNA molecules trapped in stalled 50S ribosomal subunits, and thus maintains levels of free tRNAs and 50S ribosomes. This is Peptidyl-tRNA hydrolase from Mesomycoplasma hyopneumoniae (strain 232) (Mycoplasma hyopneumoniae).